We begin with the raw amino-acid sequence, 431 residues long: Sorting nexin-31 (431 aa).

A PX domain is found at 1–107; the sequence is MHICIPVTEE…DYFRKLQMDT (107 aa).

The protein belongs to the sorting nexin family.

Its function is as follows. May be involved in protein trafficking. In Xenopus laevis (African clawed frog), this protein is Sorting nexin-31 (snx31).